Reading from the N-terminus, the 374-residue chain is MPGVGISRIVRIAVAALVALAPLMTPAHATSRIKDLANIEGVRQNQLIGYGLVVGLNGTGDTLNNIPFTKQSLQAMLERMGVNIRGATIRTGNVAAVMVTGNLPAFATQGTRMDVTVSAMGDAKSLHGGTLLVTPLLGADGNVYAVAQGSLAIGGFAAEGAAASVTKGVPTNGRIANGAIVEREIEFALNKMPNVRLALRNGDFTTAKRIAAAVNDFLGTKTAEPIDPSTVQLSIPAEFKGNVVALLTEIEQLQVEPDTAAKIIIDERSGIIVMGRDVRVATVAVAQGNLTVSISESPQVSQPNPLSRGRTVVTPRTAVGVTEDGKKLALVKNGVSLQELVDGLNGLGIGPRDLIGILQAIKAAGAIEADIEVM.

The first 29 residues, 1-29 (MPGVGISRIVRIAVAALVALAPLMTPAHA), serve as a signal peptide directing secretion.

It belongs to the FlgI family. In terms of assembly, the basal body constitutes a major portion of the flagellar organelle and consists of four rings (L,P,S, and M) mounted on a central rod.

It localises to the periplasm. Its subcellular location is the bacterial flagellum basal body. Functionally, assembles around the rod to form the L-ring and probably protects the motor/basal body from shearing forces during rotation. The sequence is that of Flagellar P-ring protein from Nitrobacter hamburgensis (strain DSM 10229 / NCIMB 13809 / X14).